A 345-amino-acid polypeptide reads, in one-letter code: Small ribosomal subunit protein mS45 (345 aa).

Residues 1–27 constitute a mitochondrion transit peptide; sequence MSYGLTGTSSKLRGTSSIFSWTQVRHF.

Belongs to the mitochondrion-specific ribosomal protein mS45 family. Component of the mitochondrial small ribosomal subunit (mt-SSU). Mature yeast 74S mitochondrial ribosomes consist of a small (37S) and a large (54S) subunit. The 37S small subunit contains a 15S ribosomal RNA (15S mt-rRNA) and 34 different proteins. The 54S large subunit contains a 21S rRNA (21S mt-rRNA) and 46 different proteins.

It is found in the mitochondrion. In terms of biological role, component of the mitochondrial ribosome (mitoribosome), a dedicated translation machinery responsible for the synthesis of mitochondrial genome-encoded proteins, including at least some of the essential transmembrane subunits of the mitochondrial respiratory chain. The mitoribosomes are attached to the mitochondrial inner membrane and translation products are cotranslationally integrated into the membrane. This is Small ribosomal subunit protein mS45 (MRPS35) from Saccharomyces cerevisiae (strain ATCC 204508 / S288c) (Baker's yeast).